The sequence spans 59 residues: Ribosome biogenesis protein Nop10 (59 aa).

This sequence belongs to the NOP10 family.

Its function is as follows. Involved in ribosome biogenesis; more specifically in 18S rRNA pseudouridylation and in cleavage of pre-rRNA. This Thermococcus sibiricus (strain DSM 12597 / MM 739) protein is Ribosome biogenesis protein Nop10.